The primary structure comprises 191 residues: GTP cyclohydrolase 1 (191 aa).

C80, H83, and C151 together coordinate Zn(2+).

It belongs to the GTP cyclohydrolase I family. As to quaternary structure, toroid-shaped homodecamer, composed of two pentamers of five dimers.

It catalyses the reaction GTP + H2O = 7,8-dihydroneopterin 3'-triphosphate + formate + H(+). It functions in the pathway cofactor biosynthesis; 7,8-dihydroneopterin triphosphate biosynthesis; 7,8-dihydroneopterin triphosphate from GTP: step 1/1. This chain is GTP cyclohydrolase 1, found in Leifsonia xyli subsp. xyli (strain CTCB07).